A 558-amino-acid chain; its full sequence is V-set and immunoglobulin domain-containing protein 10 (558 aa).

Positions methionine 1–alanine 20 are cleaved as a signal peptide. Over glycine 21–asparagine 426 the chain is Extracellular. N-linked (GlcNAc...) asparagine glycosylation is found at asparagine 32, asparagine 60, asparagine 121, asparagine 150, asparagine 159, and asparagine 218. Ig-like C2-type domains follow at residues proline 37–valine 140, proline 144–threonine 235, proline 248–serine 327, and proline 332–serine 420. The cysteines at positions 65 and 124 are disulfide-linked. 2 disulfides stabilise this stretch: cysteine 174–cysteine 221 and cysteine 265–cysteine 308. N-linked (GlcNAc...) asparagine glycosylation is present at asparagine 344. Cysteine 349 and cysteine 404 form a disulfide bridge. A helical transmembrane segment spans residues isoleucine 427–glycine 447. At leucine 448–valine 558 the chain is on the cytoplasmic side. The span at aspartate 477–glutamate 506 shows a compositional bias: acidic residues. 2 disordered regions span residues aspartate 477–histidine 515 and methionine 532–valine 558.

It is found in the membrane. This chain is V-set and immunoglobulin domain-containing protein 10 (Vsig10), found in Mus musculus (Mouse).